The chain runs to 499 residues: Pyruvate kinase (499 aa).

R50 lines the substrate pocket. K(+)-binding residues include N52, S54, D84, and T85. Residue 52 to 55 (NFSH) coordinates ATP. R91 is an ATP binding site. E241 is a Mg(2+) binding site. Substrate contacts are provided by G264, D265, and T297. A Mg(2+)-binding site is contributed by D265.

Belongs to the pyruvate kinase family. Homotetramer. Mg(2+) serves as cofactor. It depends on K(+) as a cofactor.

The enzyme catalyses pyruvate + ATP = phosphoenolpyruvate + ADP + H(+). Its pathway is carbohydrate degradation; glycolysis; pyruvate from D-glyceraldehyde 3-phosphate: step 5/5. With respect to regulation, activated by fructose 2,6-bisphosphate, activated by the effector in a non cooperative manner. In Leishmania mexicana, this protein is Pyruvate kinase (PYK).